Here is a 354-residue protein sequence, read N- to C-terminus: Guanine nucleotide-binding protein G(i) subunit alpha-3 (354 aa).

The N-myristoyl glycine moiety is linked to residue Gly2. Cys3 carries S-palmitoyl cysteine lipidation. Residues 32–354 enclose the G-alpha domain; that stretch reads KEVKLLLLGA…KNNLKECGLY (323 aa). A G1 motif region spans residues 35 to 48; sequence KLLLLGAGESGKST. GTP contacts are provided by Gly42, Glu43, Ser44, Gly45, Lys46, Ser47, Thr48, Asp150, Ser151, Leu175, Arg176, Thr177, Arg178, Val179, Lys180, Thr181, Val201, Gly203, Asn269, Lys270, Asp272, Leu273, Cys325, Ala326, and Thr327. Ser47 lines the Mg(2+) pocket. Residues 173 to 181 form a G2 motif region; sequence DVLRTRVKT. Residue Thr181 participates in Mg(2+) binding. Residues 196-205 are G3 motif; sequence FKMFDVGGQR. Residues 265-272 are G4 motif; that stretch reads ILFLNKKD. The interval 324–329 is G5 motif; the sequence is TCATDT.

This sequence belongs to the G-alpha family. G(i/o/t/z) subfamily. Heterotrimeric G proteins are composed of 3 units; alpha, beta and gamma. The alpha subunit contains the guanine nucleotide binding site. GTP binding causes dissociation of the heterotrimer, liberating the individual subunits so that they can interact with downstream effector proteins. Forms a complex with CCDC88A/GIV and EGFR which leads to enhanced EGFR signaling and triggering of cell migration; ligand stimulation is required for recruitment of GNAI3 to the complex. Interacts (inactive GDP-bound form) with CCDC88A/GIV (via GBA motif); the interaction leads to activation of GNAI3. Interacts (inactive GDP-bound form) with CCDC88C/DAPLE (via GBA motif); the interaction leads to activation of GNAI3. Interacts (inactive GDP-bound form) with NUCB1 (via GBA motif) and NUCB2 (via GBA motif); the interaction leads to activation of GNAI3. Interacts (inactive GDP-bound form) with PLCD4 (via GBA motif); the interaction leads to activation of GNAI3. Interacts with INSR; the interaction is probably mediated by CCDC88A/GIV. Interacts with GPSM1. Interacts (GDP-bound form) with GPSM2 (via GoLoco domains). Does not interact with RGS2. Interacts with RGS8 and RGS10; this strongly enhances the intrinsic GTPase activity. Interacts with RGS12. Interacts with RGS16; this strongly enhances the intrinsic GTPase activity. Interacts (via active GTP- or inactive GDP-bound form) with RGS14. Interacts (via active GTP-bound form) with TRPC5 (via ANK repeats) in a homotetrameric ion channel; the interaction is direct and activates the channel activity. Ubiquitous.

It is found in the cytoplasm. It localises to the cell membrane. Its subcellular location is the cytoskeleton. The protein resides in the microtubule organizing center. The protein localises to the centrosome. Heterotrimeric guanine nucleotide-binding proteins (G proteins) function as transducers downstream of G protein-coupled receptors (GPCRs) in numerous signaling cascades. The alpha chain contains the guanine nucleotide binding site and alternates between an active, GTP-bound state and an inactive, GDP-bound state. Signaling by an activated GPCR promotes GDP release and GTP binding. The alpha subunit has a low GTPase activity that converts bound GTP to GDP, thereby terminating the signal. Both GDP release and GTP hydrolysis are modulated by numerous regulatory proteins. Signaling is mediated via effector proteins, such as adenylate cyclase. Inhibits adenylate cyclase activity, leading to decreased intracellular cAMP levels. Stimulates the activity of receptor-regulated K(+) channels. The active GTP-bound form prevents the association of RGS14 with centrosomes and is required for the translocation of RGS14 from the cytoplasm to the plasma membrane. May play a role in cell division. The active GTP-bound form activates the calcium permeant TRPC5 ion channels. This chain is Guanine nucleotide-binding protein G(i) subunit alpha-3 (Gnai3), found in Rattus norvegicus (Rat).